Here is a 188-residue protein sequence, read N- to C-terminus: NADH-quinone oxidoreductase subunit B (188 aa).

The [4Fe-4S] cluster site is built by Cys-67, Cys-68, Cys-132, and Cys-162.

The protein belongs to the complex I 20 kDa subunit family. NDH-1 is composed of 14 different subunits. Subunits NuoB, C, D, E, F, and G constitute the peripheral sector of the complex. [4Fe-4S] cluster is required as a cofactor.

The protein localises to the cell inner membrane. The catalysed reaction is a quinone + NADH + 5 H(+)(in) = a quinol + NAD(+) + 4 H(+)(out). NDH-1 shuttles electrons from NADH, via FMN and iron-sulfur (Fe-S) centers, to quinones in the respiratory chain. Couples the redox reaction to proton translocation (for every two electrons transferred, four hydrogen ions are translocated across the cytoplasmic membrane), and thus conserves the redox energy in a proton gradient. This chain is NADH-quinone oxidoreductase subunit B, found in Maricaulis maris (strain MCS10) (Caulobacter maris).